The following is a 183-amino-acid chain: MIGYLRGLAVIVEDVEFARRLYKEGFYGRFLGYDKVKRDEVEKINAPLILGLYEALYLAEKGRLKVMGEDGREVAPEELAALGRERMRNFDEIYKIYKYFRDLGYVVKSGLKFGALFSVYEKGPGIDHAPMVVVFLEPDKGISATDITRGGRLSHSVRKTWTLATVLRQTGEVVLLGFGWARL.

Residues Tyr-120, His-128, and Lys-159 contribute to the active site.

It belongs to the tRNA-intron endonuclease family. Archaeal short subfamily. As to quaternary structure, homotetramer; although the tetramer contains four active sites, only two participate in the cleavage. Therefore, it should be considered as a dimer of dimers.

The enzyme catalyses pretRNA = a 3'-half-tRNA molecule with a 5'-OH end + a 5'-half-tRNA molecule with a 2',3'-cyclic phosphate end + an intron with a 2',3'-cyclic phosphate and a 5'-hydroxyl terminus.. Endonuclease that removes tRNA introns. Cleaves pre-tRNA at the 5'- and 3'-splice sites to release the intron. The products are an intron and two tRNA half-molecules bearing 2',3' cyclic phosphate and 5'-OH termini. Recognizes a pseudosymmetric substrate in which 2 bulged loops of 3 bases are separated by a stem of 4 bp. The protein is tRNA-splicing endonuclease of Pyrobaculum aerophilum (strain ATCC 51768 / DSM 7523 / JCM 9630 / CIP 104966 / NBRC 100827 / IM2).